The primary structure comprises 552 residues: Urocanate hydratase (552 aa).

NAD(+)-binding positions include 49–50 (GG), Gln127, 173–175 (GMG), Asp193, 239–240 (NA), 260–264 (QTSAH), 270–271 (YI), and Tyr319. Cys407 is an active-site residue. Residue Gly489 participates in NAD(+) binding.

It belongs to the urocanase family. It depends on NAD(+) as a cofactor.

The protein localises to the cytoplasm. The catalysed reaction is 4-imidazolone-5-propanoate = trans-urocanate + H2O. It functions in the pathway amino-acid degradation; L-histidine degradation into L-glutamate; N-formimidoyl-L-glutamate from L-histidine: step 2/3. Its function is as follows. Catalyzes the conversion of urocanate to 4-imidazolone-5-propionate. This is Urocanate hydratase from Bacillus cereus (strain AH820).